Reading from the N-terminus, the 73-residue chain is Structural DNA-binding protein p10 (73 aa).

Positions 1 to 35 are disordered; the sequence is MPTKAGTKSTAHKKTTTKGPSKSPKGKTHATALHQ.

The protein belongs to the asfivirus P10 family.

The protein resides in the virion. Its function is as follows. May play a role in genome packaging through direct interaction with viral DNA. Binds to ssDNA and dsDNA with the same apparent affinity in vitro. This chain is Structural DNA-binding protein p10, found in African swine fever virus (isolate Tick/Malawi/Lil 20-1/1983) (ASFV).